The following is an 80-amino-acid chain: D-alanyl carrier protein (80 aa).

A Carrier domain is found at 1-77; it reads MDIQKQIVDI…KLVEQVKKLQ (77 aa). An O-(pantetheine 4'-phosphoryl)serine modification is found at Ser-35.

It belongs to the DltC family. In terms of processing, 4'-phosphopantetheine is transferred from CoA to a specific serine of apo-DCP.

The protein localises to the cytoplasm. It functions in the pathway cell wall biogenesis; lipoteichoic acid biosynthesis. Carrier protein involved in the D-alanylation of lipoteichoic acid (LTA). The loading of thioester-linked D-alanine onto DltC is catalyzed by D-alanine--D-alanyl carrier protein ligase DltA. The DltC-carried D-alanyl group is further transferred to cell membrane phosphatidylglycerol (PG) by forming an ester bond, probably catalyzed by DltD. D-alanylation of LTA plays an important role in modulating the properties of the cell wall in Gram-positive bacteria, influencing the net charge of the cell wall. The polypeptide is D-alanyl carrier protein (Lactobacillus delbrueckii subsp. bulgaricus (strain ATCC 11842 / DSM 20081 / BCRC 10696 / JCM 1002 / NBRC 13953 / NCIMB 11778 / NCTC 12712 / WDCM 00102 / Lb 14)).